Consider the following 203-residue polypeptide: Outer-membrane lipoprotein LolB (203 aa).

A signal peptide spans 1–17 (MNRLFRLLPLASLVLTA). Cys-18 is lipidated: N-palmitoyl cysteine. Cys-18 carries S-diacylglycerol cysteine lipidation.

It belongs to the LolB family. In terms of assembly, monomer.

Its subcellular location is the cell outer membrane. In terms of biological role, plays a critical role in the incorporation of lipoproteins in the outer membrane after they are released by the LolA protein. This Klebsiella pneumoniae subsp. pneumoniae (strain ATCC 700721 / MGH 78578) protein is Outer-membrane lipoprotein LolB.